The sequence spans 498 residues: Glycerol kinase (498 aa).

T12 provides a ligand contact to ADP. ATP-binding residues include T12, T13, and S14. Residue T12 participates in sn-glycerol 3-phosphate binding. R16 contributes to the ADP binding site. Positions 82, 83, and 134 each coordinate sn-glycerol 3-phosphate. Glycerol contacts are provided by R82, E83, and Y134. Phosphohistidine; by HPr is present on H230. A sn-glycerol 3-phosphate-binding site is contributed by D244. The glycerol site is built by D244 and Q245. The ADP site is built by T266 and G309. Residues T266, G309, Q313, and G410 each coordinate ATP. G410 and N414 together coordinate ADP.

The protein belongs to the FGGY kinase family. Homotetramer and homodimer (in equilibrium). The phosphoenolpyruvate-dependent sugar phosphotransferase system (PTS), including enzyme I, and histidine-containing protein (HPr) are required for the phosphorylation, which leads to the activation of the enzyme.

It carries out the reaction glycerol + ATP = sn-glycerol 3-phosphate + ADP + H(+). Its pathway is polyol metabolism; glycerol degradation via glycerol kinase pathway; sn-glycerol 3-phosphate from glycerol: step 1/1. With respect to regulation, activated by phosphorylation and inhibited by fructose 1,6-bisphosphate (FBP). In terms of biological role, key enzyme in the regulation of glycerol uptake and metabolism. Catalyzes the phosphorylation of glycerol to yield sn-glycerol 3-phosphate. This chain is Glycerol kinase, found in Staphylococcus aureus (strain MSSA476).